A 48-amino-acid polypeptide reads, in one-letter code: Glycine-rich RNA-binding protein 3 (48 aa).

This chain is Glycine-rich RNA-binding protein 3, found in Populus euphratica (Euphrates poplar).